A 97-amino-acid chain; its full sequence is U6-theraphotoxin-Hhn1a 3 (97 aa).

The N-terminal stretch at 1–33 (MLIKQFSRRSKNTKVQILLAFAALFVLAVGSYA) is a signal peptide. The propeptide occupies 34-61 (SESKKLDLRDALFSAMFSADYQLNPQER). 3 disulfide bridges follow: Cys-63-Cys-77, Cys-70-Cys-82, and Cys-76-Cys-89.

The protein belongs to the neurotoxin 10 (Hwtx-1) family. 12 (Hntx-12) subfamily. Expressed by the venom gland.

It is found in the secreted. Functionally, ion channel inhibitor. This is U6-theraphotoxin-Hhn1a 3 from Cyriopagopus hainanus (Chinese bird spider).